We begin with the raw amino-acid sequence, 141 residues long: HTH-type transcriptional repressor NsrR (141 aa).

The region spanning 2-129 (QLTSFTDYGL…DNYTLADMVK (128 aa)) is the HTH rrf2-type domain. Residues 28-51 (ISQVTEVYGVSRNHMVKIINQLSR) constitute a DNA-binding region (H-T-H motif). Residues Cys-91, Cys-96, and Cys-102 each coordinate [2Fe-2S] cluster.

Requires [2Fe-2S] cluster as cofactor.

In terms of biological role, nitric oxide-sensitive repressor of genes involved in protecting the cell against nitrosative stress. May require iron for activity. This Yersinia pseudotuberculosis serotype O:1b (strain IP 31758) protein is HTH-type transcriptional repressor NsrR.